The following is a 215-amino-acid chain: Ribosomal RNA small subunit methyltransferase G (215 aa).

S-adenosyl-L-methionine-binding positions include Gly-77, Phe-82, 130–131 (IE), and Arg-146.

It belongs to the methyltransferase superfamily. RNA methyltransferase RsmG family.

The protein resides in the cytoplasm. It catalyses the reaction guanosine(527) in 16S rRNA + S-adenosyl-L-methionine = N(7)-methylguanosine(527) in 16S rRNA + S-adenosyl-L-homocysteine. Its function is as follows. Specifically methylates the N7 position of guanine in position 527 of 16S rRNA. The sequence is that of Ribosomal RNA small subunit methyltransferase G from Bartonella quintana (strain Toulouse) (Rochalimaea quintana).